The chain runs to 315 residues: Glutathione synthetase (315 aa).

The 186-residue stretch at K125–E310 folds into the ATP-grasp domain. Residue W151–G207 coordinates ATP. Mg(2+)-binding residues include E281 and N283.

Belongs to the prokaryotic GSH synthase family. Requires Mg(2+) as cofactor. Mn(2+) serves as cofactor.

The enzyme catalyses gamma-L-glutamyl-L-cysteine + glycine + ATP = glutathione + ADP + phosphate + H(+). The protein operates within sulfur metabolism; glutathione biosynthesis; glutathione from L-cysteine and L-glutamate: step 2/2. This Salmonella typhi protein is Glutathione synthetase.